A 1178-amino-acid chain; its full sequence is Phytochrome B (1178 aa).

A compositionally biased stretch (polar residues) spans Met-1–Ser-15. Residues Met-1–Thr-58 form a disordered region. Positions His-23–Ser-32 are enriched in basic residues. Residues Ala-42–Thr-55 are compositionally biased toward gly residues. The GAF domain occupies Asp-267–Leu-449. Cys-372 lines the phytochromobilin pocket. PAS domains are found at residues Val-668–Glu-739 and Asp-802–Ile-873. In terms of domain architecture, Histidine kinase spans Tyr-950–Arg-1170.

This sequence belongs to the phytochrome family. As to quaternary structure, homodimer. Contains one covalently linked phytochromobilin chromophore.

Functionally, regulatory photoreceptor which exists in two forms that are reversibly interconvertible by light: the Pr form that absorbs maximally in the red region of the spectrum and the Pfr form that absorbs maximally in the far-red region. Photoconversion of Pr to Pfr induces an array of morphogenic responses, whereas reconversion of Pfr to Pr cancels the induction of those responses. Pfr controls the expression of a number of nuclear genes including those encoding the small subunit of ribulose-bisphosphate carboxylase, chlorophyll A/B binding protein, protochlorophyllide reductase, rRNA, etc. It also controls the expression of its own gene(s) in a negative feedback fashion. This is Phytochrome B (PHYB) from Sorghum bicolor (Sorghum).